The primary structure comprises 397 residues: CCA-adding enzyme (397 aa).

2 residues coordinate ATP: Gly-27 and Arg-30. CTP-binding residues include Gly-27 and Arg-30. Asp-40 and Asp-42 together coordinate Mg(2+). Positions 111, 154, 157, 160, and 163 each coordinate ATP. CTP-binding residues include Arg-111, Asp-154, Arg-157, Arg-160, and Arg-163.

This sequence belongs to the tRNA nucleotidyltransferase/poly(A) polymerase family. Bacterial CCA-adding enzyme type 3 subfamily. In terms of assembly, homodimer. The cofactor is Mg(2+).

It carries out the reaction a tRNA precursor + 2 CTP + ATP = a tRNA with a 3' CCA end + 3 diphosphate. It catalyses the reaction a tRNA with a 3' CCA end + 2 CTP + ATP = a tRNA with a 3' CCACCA end + 3 diphosphate. Its function is as follows. Catalyzes the addition and repair of the essential 3'-terminal CCA sequence in tRNAs without using a nucleic acid template. Adds these three nucleotides in the order of C, C, and A to the tRNA nucleotide-73, using CTP and ATP as substrates and producing inorganic pyrophosphate. tRNA 3'-terminal CCA addition is required both for tRNA processing and repair. Also involved in tRNA surveillance by mediating tandem CCA addition to generate a CCACCA at the 3' terminus of unstable tRNAs. While stable tRNAs receive only 3'-terminal CCA, unstable tRNAs are marked with CCACCA and rapidly degraded. This Bacillus licheniformis (strain ATCC 14580 / DSM 13 / JCM 2505 / CCUG 7422 / NBRC 12200 / NCIMB 9375 / NCTC 10341 / NRRL NRS-1264 / Gibson 46) protein is CCA-adding enzyme.